A 417-amino-acid chain; its full sequence is Serine hydroxymethyltransferase 1 (417 aa).

Residues leucine 121 and 125-127 contribute to the (6S)-5,6,7,8-tetrahydrofolate site; that span reads GHL. Lysine 230 bears the N6-(pyridoxal phosphate)lysine mark. 355 to 357 serves as a coordination point for (6S)-5,6,7,8-tetrahydrofolate; that stretch reads SPF.

The protein belongs to the SHMT family. In terms of assembly, homodimer. Pyridoxal 5'-phosphate serves as cofactor.

Its subcellular location is the cytoplasm. The enzyme catalyses (6R)-5,10-methylene-5,6,7,8-tetrahydrofolate + glycine + H2O = (6S)-5,6,7,8-tetrahydrofolate + L-serine. It participates in one-carbon metabolism; tetrahydrofolate interconversion. Its pathway is amino-acid biosynthesis; glycine biosynthesis; glycine from L-serine: step 1/1. Functionally, catalyzes the reversible interconversion of serine and glycine with tetrahydrofolate (THF) serving as the one-carbon carrier. This reaction serves as the major source of one-carbon groups required for the biosynthesis of purines, thymidylate, methionine, and other important biomolecules. Also exhibits THF-independent aldolase activity toward beta-hydroxyamino acids, producing glycine and aldehydes, via a retro-aldol mechanism. This is Serine hydroxymethyltransferase 1 from Pseudomonas syringae pv. tomato (strain ATCC BAA-871 / DC3000).